The chain runs to 526 residues: Spermatogenesis-associated protein 7 homolog (526 aa).

Positions 203 to 240 (DFSDQRMEAETQTELSSFNSELGTAEKKSSKDSDVSIK) are disordered. A compositionally biased stretch (polar residues) spans 212-224 (ETQTELSSFNSEL). Residues 226 to 237 (TAEKKSSKDSDV) show a composition bias toward basic and acidic residues.

As to quaternary structure, found in a complex with CFAP410, NEK1 and SPATA7. Interacts with NEK1. Interacts with RPGRIP1. Interacts with RPGR. Interacts with NPHP4. Interacts with NPHP1. Interacts with AHI1. As to expression, in early prophase of primary spermatocytes.

It is found in the cytoplasm. The protein resides in the cytoskeleton. Its subcellular location is the cilium axoneme. The protein localises to the cilium basal body. It localises to the cell projection. It is found in the cilium. The protein resides in the photoreceptor outer segment. Functionally, involved in the maintenance of both rod and cone photoreceptor cells. Required for photoreceptor-specific localization of proximal connecting cilium (CC) proteins RPGR, AHI1, NPHP1, NPHP4, and RPGRIP1 at the distal CC, a photoreceptor-specific extension of the primary cilium transition zone. Maintenance of protein localization at the photoreceptor-specific distal CC is essential for normal microtubule stability and to prevent photoreceptor degeneration. This is Spermatogenesis-associated protein 7 homolog (Spata7) from Rattus norvegicus (Rat).